The following is a 275-amino-acid chain: Provicilin (275 aa).

Residues 1–17 (DNAEIEKILLEEHEKET) are compositionally biased toward basic and acidic residues. Disordered regions lie at residues 1–71 (DNAE…LKSS) and 134–164 (LVGQ…KNQV). A compositionally biased stretch (low complexity) spans 50 to 63 (NAKSSSKKSVSSRS). The 173-residue stretch at 66–238 (FNLKSSDPIY…TFPGSAQEVD (173 aa)) folds into the Cupin type-1 domain. Residues 147 to 157 (EEDDEEEEQRE) are compositionally biased toward acidic residues.

Belongs to the 7S seed storage protein family.

It localises to the vacuole. It is found in the aleurone grain. In terms of biological role, seed storage protein. The protein is Provicilin of Pisum sativum (Garden pea).